The sequence spans 409 residues: Potassium channel subfamily K member 3 (409 aa).

At 1–8 the chain is on the cytoplasmic side; sequence MKRQNVRT. A helical membrane pass occupies residues 9–29; that stretch reads LALIVCTFTYLLVGAAVFDAL. N53 carries an N-linked (GlcNAc...) asparagine glycan. An intramembrane region (pore-forming) is located at residues 78-101; it reads WRFAGSFYFAITVITTIGYGHAAP. The helical transmembrane segment at 108 to 128 threads the bilayer; the sequence is VFCMFYALLGIPLTLVMFQSL. Residues 129 to 158 lie on the Cytoplasmic side of the membrane; that stretch reads GERINTFVRYLLHRAKRGLGMRHAEVSMAN. A helical membrane pass occupies residues 159-179; it reads MVLIGFVSCISTLCIGAAAFS. The pore-forming intramembrane region spans 184–207; it reads WTFFQAYYYCFITLTTIGFGDYVA. Residues 223–243 form a helical membrane-spanning segment; sequence FSFVYILTGLTVIGAFLNLVV. Topologically, residues 244-409 are cytoplasmic; that stretch reads LRFMTMNAED…RGLMKRRSSV (166 aa).

It belongs to the two pore domain potassium channel (TC 1.A.1.8) family. As to quaternary structure, homodimer. Heterodimer with KCNK1. Heterodimer with KCNK9. Very strong expression in heart, also detected in kidney, brain, skin, testis, lung, skeletal muscle, small intestine and stomach. Not detected in liver, thymus or spleen. Expressed in adrenal glands mainly in zona glomerulosa and zona fasciculata of the cortex. Expressed at higher levels in brown and beige than in white adipocytes.

It is found in the cell membrane. It catalyses the reaction K(+)(in) = K(+)(out). The enzyme catalyses Na(+)(in) = Na(+)(out). Activated by halothane and isoflurane. Inhibited by external acidification, diacylglycerol and anandamide. Inactivated by barium. In terms of biological role, k(+) channel that conducts voltage-dependent outward rectifying currents upon membrane depolarization. Voltage sensing is coupled to K(+) electrochemical gradient in an 'ion flux gating' mode where outward but not inward ion flow opens the gate. Changes ion selectivity and becomes permeable to Na(+) ions in response to extracellular acidification. Protonation of the pH sensor His-98 stabilizes C-type inactivation conformation likely converting the channel from outward K(+)-conducting, to inward Na(+)-conducting to nonconductive state. Homo- and heterodimerizes to form functional channels with distinct regulatory and gating properties. Allows K(+) currents with fast-gating kinetics important for the repolarization and hyperpolarization phases of action potentials. In cerebellar granule cells, heteromeric KCNK3:KCNK9 channel may hyperpolarize the resting membrane potential to limit intrinsic neuronal excitability, but once the action potential threshold is reached, it may support high-frequency action potential firing and increased neuronal excitability. Dispensable for central chemosensory respiration i.e. breathing controlled by brainstem CO2/pH, it rather conducts pH-sensitive currents and controls the firing rate of serotonergic raphe neurons involved in potentiation of the respiratory chemoreflex. Additionally, imparts chemosensitivity to type 1 cells in carotid bodies which respond to a decrease in arterial oxygen pressure or an increase in carbon dioxide pressure or pH to initiate adaptive changes in pulmonary ventilation. In adrenal gland, contributes to the maintenance of a hyperpolarized resting membrane potential of aldosterone-producing cells at zona glomerulosa and limits aldosterone release as part of a regulatory mechanism that controls arterial blood pressure and electrolyte homeostasis. In brown adipocytes, mediates K(+) efflux that counteracts norepinephrine-induced membrane depolarization, limits Ca(2+) efflux and downstream cAMP and PKA signaling, ultimately attenuating lipid oxidation and adaptive thermogenesis. The sequence is that of Potassium channel subfamily K member 3 from Mus musculus (Mouse).